The chain runs to 489 residues: Poly(A) RNA polymerase GLD2 (489 aa).

A disordered region spans residues 93–118 (RQRFSCPSPHNQSARNSNFTSQPVTR). The span at 100-116 (SPHNQSARNSNFTSQPV) shows a compositional bias: polar residues. Aspartate 219 and aspartate 221 together coordinate Mg(2+). The PAP-associated domain maps to 386–440 (SLGDLFLGFLRYYATVFKWDKQVISVRMARTLPKSNCKEWKDKFICVEEPFNRTN).

This sequence belongs to the DNA polymerase type-B-like family. GLD2 subfamily. The cofactor is Mg(2+). Requires Mn(2+) as cofactor.

Its subcellular location is the cytoplasm. It carries out the reaction RNA(n) + ATP = RNA(n)-3'-adenine ribonucleotide + diphosphate. Functionally, cytoplasmic poly(A) RNA polymerase that adds successive AMP monomers to the 3'-end of specific RNAs, forming a poly(A) tail. In contrast to the canonical nuclear poly(A) RNA polymerase, it only adds poly(A) to selected cytoplasmic mRNAs. May not play a role in replication-dependent histone mRNA degradation. This Danio rerio (Zebrafish) protein is Poly(A) RNA polymerase GLD2.